The primary structure comprises 374 residues: Chaperone protein DnaJ (374 aa).

Residues 5–70 form the J domain; it reads DYYEVLGVER…SKRAAFDQYG (66 aa). The CR-type zinc finger occupies 133–211; that stretch reads GTTVSIRVPT…CHGEGRVEEY (79 aa). Zn(2+) is bound by residues Cys-146, Cys-149, Cys-163, Cys-166, Cys-185, Cys-188, Cys-199, and Cys-202. CXXCXGXG motif repeat units lie at residues 146–153, 163–170, 185–192, and 199–206; these read CQPCDGSG, CPTCGGIG, CPRCHGQG, and CTSCHGEG.

It belongs to the DnaJ family. Homodimer. Zn(2+) is required as a cofactor.

The protein localises to the cytoplasm. Its function is as follows. Participates actively in the response to hyperosmotic and heat shock by preventing the aggregation of stress-denatured proteins and by disaggregating proteins, also in an autonomous, DnaK-independent fashion. Unfolded proteins bind initially to DnaJ; upon interaction with the DnaJ-bound protein, DnaK hydrolyzes its bound ATP, resulting in the formation of a stable complex. GrpE releases ADP from DnaK; ATP binding to DnaK triggers the release of the substrate protein, thus completing the reaction cycle. Several rounds of ATP-dependent interactions between DnaJ, DnaK and GrpE are required for fully efficient folding. Also involved, together with DnaK and GrpE, in the DNA replication of plasmids through activation of initiation proteins. In Pseudomonas putida (strain GB-1), this protein is Chaperone protein DnaJ.